A 111-amino-acid chain; its full sequence is Ghrelin (111 aa).

Residues 1–26 (MRQMKRTAYIILLVCVLALWMDSVQA) form the signal peptide. The segment covering 28–37 (SSFLSPSQRP) has biased composition (polar residues). Positions 28–53 (SSFLSPSQRPQGKDKKPPRVGRRDSD) are disordered. The O-decanoyl serine; alternate moiety is linked to residue serine 29. Serine 29 carries O-hexanoyl serine; alternate lipidation. Serine 29 carries O-octanoyl serine; alternate lipidation. Positions 38–53 (QGKDKKPPRVGRRDSD) are enriched in basic and acidic residues. At valine 47 the chain carries Valine amide. Residues 51-111 (DSDGILDLFM…DLLMDTPAKE (61 aa)) constitute a propeptide, removed in mature form.

This sequence belongs to the motilin family. Post-translationally, O-octanoylated by GOAT/MBOAT4. O-octanoylation or O-decanoylation is essential for activity. The O-decanoylated form ghrelin-21-C10 differs in the length of the carbon backbone of the carboxylic acid forming an ester bond with Ser-29. 44% of eel ghrelin is O-decanoylated. In terms of tissue distribution, highest levels in stomach and anterior intestine. Lower levels in posterior intestine, kidney and brain. Low levels in heart, head kidney and middle intestine.

The protein localises to the secreted. Its function is as follows. Ligand for growth hormone secretagogue receptor type 1 (GHSR). Induces the release of growth hormone from the pituitary. Has an appetite-stimulating effect, induces adiposity and stimulates gastric acid secretion. Involved in growth regulation. The polypeptide is Ghrelin (ghrl) (Anguilla japonica (Japanese eel)).